Consider the following 746-residue polypeptide: F-box only protein 30 (746 aa).

The TRAF-type zinc-finger motif lies at 49–110 (EHRLLCPFER…SYSDRKSYES (62 aa)). Disordered regions lie at residues 222–241 (MDEE…DQDH) and 247–266 (IGAV…QAEQ). Positions 225–241 (ENNKESFQDKNLKDQDH) are enriched in basic and acidic residues. The span at 256–266 (SGTSQNAQAEQ) shows a compositional bias: polar residues. Ser-383 bears the Phosphoserine mark. Positions 611–659 (SDHLSSLPFEVLQHIAGFLDGFSLCQLACVSRLMRDVCGSLLQSRGMVI) constitute an F-box domain.

In terms of assembly, part of a SCF (SKP1-cullin-F-box) protein ligase complex. Interacts with SKP1, CUL1 and RBX1/ROC1. In terms of processing, auto-ubiquitinated. Post-translationally, may be neddylated. Neddylation may be required for E3 ligase activity, since it was observed only after purification with o-phenanthroline.

It participates in protein modification; protein ubiquitination. Its function is as follows. Substrate-recognition component of the SCF (SKP1-CUL1-F-box protein)-type E3 ubiquitin ligase complex. Required for muscle atrophy following denervation. In Mus musculus (Mouse), this protein is F-box only protein 30 (Fbxo30).